A 500-amino-acid chain; its full sequence is Na(+)/H(+) antiporter NhaB (500 aa).

The next 11 membrane-spanning stretches (helical) occupy residues 13–33 (FLGA…IINP), 34–54 (IAVV…EFIF), 62–82 (CYPL…GLTS), 97–117 (ILLL…LLFI), 129–149 (IVIS…LDAL), 242–262 (FLYV…TVVI), 306–326 (GIVA…VGLV), 350–370 (FEEA…VSVI), 392–412 (PIMF…VFVA), 449–469 (VATP…IAPL), and 477–497 (MVWM…LCVT).

Belongs to the NhaB Na(+)/H(+) (TC 2.A.34) antiporter family.

It localises to the cell inner membrane. The enzyme catalyses 2 Na(+)(in) + 3 H(+)(out) = 2 Na(+)(out) + 3 H(+)(in). Its function is as follows. Na(+)/H(+) antiporter that extrudes sodium in exchange for external protons. This chain is Na(+)/H(+) antiporter NhaB, found in Marinomonas sp. (strain MWYL1).